The following is a 459-amino-acid chain: 11S globulin seed storage protein 2 (459 aa).

The signal sequence occupies residues 1-21; it reads MVAFKFLLALSLSLLVSAAIA. Intrachain disulfides connect Cys-34–Cys-67 and Cys-110–Cys-284. Cupin type-1 domains follow at residues 37 to 237 and 290 to 439; these read QRIS…ETIR and TNVE…NQAQ. Residues 118–139 are disordered; it reads RSQRTMERTEASEQQDRGSVRD. Residues 121-139 are compositionally biased toward basic and acidic residues; the sequence is RTMERTEASEQQDRGSVRD.

Belongs to the 11S seed storage protein (globulins) family. As to quaternary structure, homohexamer. Each subunit is composed of an acidic and a basic chain derived from a single precursor and linked by a disulfide bond. As to expression, expressed in seeds (at protein level). Expressed in seeds.

In terms of biological role, seed storage protein. The chain is 11S globulin seed storage protein 2 from Sesamum indicum (Oriental sesame).